Here is a 274-residue protein sequence, read N- to C-terminus: Large ribosomal subunit protein uL2cz/uL2cy (274 aa).

Disordered regions lie at residues 1–26 (MAIHLYKTSTPSTRNRTVDSRVKSNP) and 223–274 (MNPV…RRSK).

The protein belongs to the universal ribosomal protein uL2 family. Part of the 50S ribosomal subunit.

It is found in the plastid. Its subcellular location is the chloroplast. This Daucus carota (Wild carrot) protein is Large ribosomal subunit protein uL2cz/uL2cy (rpl2-A).